Consider the following 354-residue polypeptide: Sulfate/thiosulfate import ATP-binding protein CysA (354 aa).

Residues 3-237 form the ABC transporter domain; the sequence is IEVRGLSKRF…PATPFVYGFL (235 aa). Position 35 to 42 (35 to 42) interacts with ATP; sequence GPSGCGKT.

Belongs to the ABC transporter superfamily. Sulfate/tungstate importer (TC 3.A.1.6) family. In terms of assembly, the complex is composed of two ATP-binding proteins (CysA), two transmembrane proteins (CysT and CysW) and a solute-binding protein (CysP).

The protein localises to the cell inner membrane. It carries out the reaction sulfate(out) + ATP + H2O = sulfate(in) + ADP + phosphate + H(+). It catalyses the reaction thiosulfate(out) + ATP + H2O = thiosulfate(in) + ADP + phosphate + H(+). Functionally, part of the ABC transporter complex CysAWTP involved in sulfate/thiosulfate import. Responsible for energy coupling to the transport system. The protein is Sulfate/thiosulfate import ATP-binding protein CysA of Bordetella parapertussis (strain 12822 / ATCC BAA-587 / NCTC 13253).